The chain runs to 204 residues: Urease accessory protein UreG (204 aa).

GTP is bound at residue 11-18 (GPVGAGKH).

This sequence belongs to the SIMIBI class G3E GTPase family. UreG subfamily. In terms of assembly, homodimer. UreD, UreF and UreG form a complex that acts as a GTP-hydrolysis-dependent molecular chaperone, activating the urease apoprotein by helping to assemble the nickel containing metallocenter of UreC. The UreE protein probably delivers the nickel.

Its subcellular location is the cytoplasm. In terms of biological role, facilitates the functional incorporation of the urease nickel metallocenter. This process requires GTP hydrolysis, probably effectuated by UreG. The chain is Urease accessory protein UreG from Staphylococcus xylosus.